The chain runs to 178 residues: Gamma-crystallin S (178 aa).

Serine 2 carries the post-translational modification N-acetylserine. The interval 2–5 (SKSG) is N-terminal arm. Beta/gamma crystallin 'Greek key' domains follow at residues 6 to 44 (TKIT…RVEG) and 45 to 87 (GTWA…RAVH). The connecting peptide stretch occupies residues 88–93 (LSSGGQ). Beta/gamma crystallin 'Greek key' domains follow at residues 94 to 134 (YKIQ…KVLD) and 135 to 177 (GVWI…RRIV).

The protein belongs to the beta/gamma-crystallin family. As to quaternary structure, monomer.

Crystallins are the dominant structural components of the vertebrate eye lens. In Canis lupus familiaris (Dog), this protein is Gamma-crystallin S (CRYGS).